Consider the following 516-residue polypeptide: Amino-acid permease BAT1 (516 aa).

12 helical membrane-spanning segments follow: residues 33-53 (LSVF…TGIT), 70-90 (YGWF…AEIC), 113-133 (PLAS…VTAS), 164-184 (VVIG…SLPI), 189-209 (FIGQ…MILI), 232-252 (LGIT…QYTI), 275-295 (GIIS…LGIS), 328-348 (FGSG…VFFC), 383-403 (VPIN…LTSL), 406-426 (IVAF…AYAI), 452-472 (VVGW…SLPV), and 483-503 (YTPV…LFSA).

It belongs to the amino acid-polyamine-organocation (APC) superfamily. Amino acid/choline transporter (ACT) (TC 2.A.3.4) family. Expressed in roots, rosette leaves, stems, cauline leaves, flowers and siliques.

Its subcellular location is the mitochondrion membrane. Functionally, may play a role in primary carbon metabolism and plant growth, by mediating the transport of GABA from the cytosol to mitochondria. When expressed in a heterologous system (yeast), imports Arg and Ala across the plasma membrane and exports Lys and Glu, but does not transport proline. This Arabidopsis thaliana (Mouse-ear cress) protein is Amino-acid permease BAT1 (BAT1).